A 524-amino-acid polypeptide reads, in one-letter code: Homeobox protein engrailed-like SMOX-2 (524 aa).

Positions 194-218 (SSSSSSSSSSSSSSSSSSCSTNSSS) are disordered. A DNA-binding region (homeobox) is located at residues 423 to 482 (LKRPRTSFTVPQLKRLSQEFEKNRYLDELRRKKLATELDLRESQVKIWFQNKRAKTKKAS).

It belongs to the engrailed homeobox family.

It is found in the nucleus. This chain is Homeobox protein engrailed-like SMOX-2 (SMOX-2), found in Schistosoma mansoni (Blood fluke).